The sequence spans 153 residues: Interleukin-2 (153 aa).

An N-terminal signal peptide occupies residues 1–20 (MYRMQLLSCIALSLALVTNS). Threonine 23 is a glycosylation site (O-linked (GalNAc...) threonine). Cysteines 78 and 125 form a disulfide.

It belongs to the IL-2 family.

It is found in the secreted. In terms of biological role, cytokine produced by activated CD4-positive helper T-cells and to a lesser extend activated CD8-positive T-cells and natural killer (NK) cells that plays pivotal roles in the immune response and tolerance. Binds to a receptor complex composed of either the high-affinity trimeric IL-2R (IL2RA/CD25, IL2RB/CD122 and IL2RG/CD132) or the low-affinity dimeric IL-2R (IL2RB and IL2RG). Interaction with the receptor leads to oligomerization and conformation changes in the IL-2R subunits resulting in downstream signaling starting with phosphorylation of JAK1 and JAK3. In turn, JAK1 and JAK3 phosphorylate the receptor to form a docking site leading to the phosphorylation of several substrates including STAT5. This process leads to activation of several pathways including STAT, phosphoinositide-3-kinase/PI3K and mitogen-activated protein kinase/MAPK pathways. Functions as a T-cell growth factor and can increase NK-cell cytolytic activity as well. Promotes strong proliferation of activated B-cells and subsequently immunoglobulin production. Plays a pivotal role in regulating the adaptive immune system by controlling the survival and proliferation of regulatory T-cells, which are required for the maintenance of immune tolerance. Moreover, participates in the differentiation and homeostasis of effector T-cell subsets, including Th1, Th2, Th17 as well as memory CD8-positive T-cells. This is Interleukin-2 (IL2) from Homo sapiens (Human).